The primary structure comprises 340 residues: CMP-sialic acid transporter 1 (340 aa).

The Cytoplasmic segment spans residues 1–5 (MAATP). The helical transmembrane segment at 6 to 26 (WYFVAVLLTILTSSQGILTTL) threads the bilayer. The Lumenal segment spans residues 27–36 (SQSDGGYKYD). The helical transmembrane segment at 37–57 (YATVPFLAEVFKLIISGLFLW) threads the bilayer. At 58–78 (REMRTSSSTTSRITTDWKSVR) the chain is on the cytoplasmic side. A helical membrane pass occupies residues 79-99 (LFVIPSLIYLIHNNVQFATLT). Residues 100–102 (YVD) lie on the Lumenal side of the membrane. A helical transmembrane segment spans residues 103 to 125 (TSTYQIMGNLKIVTTGILFRLFL). At 126-168 (KRKLSKLQWMAIGLLAVGTTTSQVKGCGEASCDSLFTAPIQGY) the chain is on the cytoplasmic side. The helical transmembrane segment at 169–189 (LLGILSAGLSALAGIYTEFLM) threads the bilayer. Residues 190–200 (KRNNDTLYWQN) are Lumenal-facing. Residues 201 to 217 (LQLYTFGSLFNVARLIA) traverse the membrane as a helical segment. The Cytoplasmic portion of the chain corresponds to 218-238 (DDFRHGFEKGPWWQRIFDGYS). The chain crosses the membrane as a helical span at residues 239–259 (ITTWLVVLNLGSTGLLVSWLM). At 260–282 (KYADNIVKVYSTSMAMLLTMVAS) the chain is on the lumenal side. The helical transmembrane segment at 283–303 (IYLFSFKPTLQLFLGIVICIM) threads the bilayer. Over 304–340 (SLHMYFAPPHTLVDLPVTNEAHAKTLKQVVVEEKTDS) the chain is Cytoplasmic.

It belongs to the nucleotide-sugar transporter family. CMP-Sialate:CMP antiporter (TC 2.A.7.12) subfamily.

The protein resides in the golgi apparatus membrane. Essential protein. Sugar transporter involved in the transport of CMP-sialic acid from the cytoplasm into the Golgi. The protein is CMP-sialic acid transporter 1 of Arabidopsis thaliana (Mouse-ear cress).